The chain runs to 342 residues: MDYKEAGVDVEAGRNFVEKIKKKVESTHRPEVLGGLGGFGGFFQIPSGYQEPVLVSGTDGVGTKLKLAQGLNCHHTVGIDLVAMCVNDVLTSGAQPLFFLDYLATGQLNPQQLAEVVEGIVEGCHLSHCALLGGETAEMPGFYGVGEYDLAGFCVGIVEKSLLLDGSQVQIGDAVIGLASSGVHSNGFSLVRKIVETQGLSWDFCPDILEGKSLGEVLLTPTQIYVKPILEALSSNLKIHGMAHITGGGLPENLPRCLQANQSVQINPNSWEILPIFTWLAQAGQVSPSAMFNTFNMGIGFVVIVPVDQAETTLNWFNNKGIKAYQMGEVIEGTGHLVGLDF.

Belongs to the AIR synthase family.

It is found in the cytoplasm. It carries out the reaction 2-formamido-N(1)-(5-O-phospho-beta-D-ribosyl)acetamidine + ATP = 5-amino-1-(5-phospho-beta-D-ribosyl)imidazole + ADP + phosphate + H(+). Its pathway is purine metabolism; IMP biosynthesis via de novo pathway; 5-amino-1-(5-phospho-D-ribosyl)imidazole from N(2)-formyl-N(1)-(5-phospho-D-ribosyl)glycinamide: step 2/2. The sequence is that of Phosphoribosylformylglycinamidine cyclo-ligase from Gloeothece citriformis (strain PCC 7424) (Cyanothece sp. (strain PCC 7424)).